The primary structure comprises 202 residues: Ribosome maturation factor RimM (202 aa).

The PRC barrel domain occupies 121–202; that stretch reads ADEYYWVDLI…CITVDWQPDY (82 aa).

It belongs to the RimM family. Binds ribosomal protein uS19.

It is found in the cytoplasm. Its function is as follows. An accessory protein needed during the final step in the assembly of 30S ribosomal subunit, possibly for assembly of the head region. Essential for efficient processing of 16S rRNA. May be needed both before and after RbfA during the maturation of 16S rRNA. It has affinity for free ribosomal 30S subunits but not for 70S ribosomes. This Polaromonas naphthalenivorans (strain CJ2) protein is Ribosome maturation factor RimM.